The primary structure comprises 89 residues: Chromosomal protein MC1a (89 aa).

In terms of biological role, protects DNA against thermal denaturation and modulates transcription. In Methanothrix soehngenii (Methanosaeta concilii), this protein is Chromosomal protein MC1a.